We begin with the raw amino-acid sequence, 147 residues long: Large ribosomal subunit protein uL13 (147 aa).

It belongs to the universal ribosomal protein uL13 family. Part of the 50S ribosomal subunit.

In terms of biological role, this protein is one of the early assembly proteins of the 50S ribosomal subunit, although it is not seen to bind rRNA by itself. It is important during the early stages of 50S assembly. This is Large ribosomal subunit protein uL13 from Beutenbergia cavernae (strain ATCC BAA-8 / DSM 12333 / CCUG 43141 / JCM 11478 / NBRC 16432 / NCIMB 13614 / HKI 0122).